A 970-amino-acid polypeptide reads, in one-letter code: GEM-interacting protein (970 aa).

Ser-19 bears the Phosphoserine mark. Disordered regions lie at residues 44–76, 224–263, and 377–478; these read PLLS…EGPV, SEDL…AQAK, and PLDI…ENGL. A compositionally biased stretch (polar residues) spans 56–65; the sequence is PTATVTNEAS. Phosphoserine occurs at positions 71, 231, 234, 243, 437, and 441. The F-BAR domain occupies 81–344; it reads EELDLRLIRT…CCAPFEPGQR (264 aa). Polar residues predominate over residues 231-246; the sequence is SQGSPEDSAPQASPGP. Positions 459-472 are enriched in acidic residues; it reads SSDDFEERDPDLGD. The Phorbol-ester/DAG-type zinc-finger motif lies at 493-537; sequence THQLRRLRGPAKCRECEAFMVSGTECEECFLTCHKRCLETLLILC. Residues 554–757 enclose the Rho-GAP domain; the sequence is LQLPRDFPEE…FLIVHYEQIF (204 aa). At Thr-660 the chain carries Phosphothreonine. Positions 762–878 are disordered; it reads LPQATEPPPQ…PVKYPRGGVR (117 aa). Pro residues predominate over residues 766–778; it reads TEPPPQDSSPAPG. The span at 815–830 shows a compositional bias: polar residues; it reads EQHPTATPTEIPTPQS. Positions 831–844 are enriched in basic and acidic residues; it reads DQREDVAEDTKDGG. Residues 847–863 are compositionally biased toward polar residues; sequence VSSQGPEDSLLGTQSRG. Phosphoserine occurs at positions 885, 907, 914, 919, and 923. The segment at 897-932 is disordered; that stretch reads ETPITSVPRGSLRGRGPSPAAASPEGSPLRRTPLPK. The span at 910-923 shows a compositional bias: low complexity; it reads GRGPSPAAASPEGS.

In terms of assembly, interacts with GEM through its N-terminal.

In terms of biological role, stimulates, in vitro and in vivo, the GTPase activity of RhoA. This chain is GEM-interacting protein (GMIP), found in Homo sapiens (Human).